The chain runs to 886 residues: Protein naked cuticle homolog (886 aa).

Residues 62-79 (KSSASTGSGTGQTKTSFQ) show a composition bias toward low complexity. The segment at 62-149 (KSSASTGSGT…AGGASGAGAT (88 aa)) is disordered. A compositionally biased stretch (basic residues) spans 80–92 (HSHHHHHHGHHHQ). Residues 93–112 (SPSSNGHNHSGTSHQQQQQQ) are compositionally biased toward low complexity. The segment covering 132-145 (KAGGGNATAGGASG) has biased composition (gly residues). The EF-hand domain maps to 181–216 (KKPQPLQFSFTLYDLDGHGKITKDDIAGIVSTIYES). Disordered regions lie at residues 267 to 286 (RKLISDDDGSDTSENCPRLL) and 307 to 338 (AALQNQQQQQQQQHHHHHHHHSNGSSGKLKES). Over residues 319-328 (QHHHHHHHHS) the composition is skewed to basic residues. The segment at 554–583 (ECWKSSLCRRELIEIIRESMVKNSLCFQPN) is required for nuclear localization and inhibition of Wnt signaling. Positions 789 to 861 (DGEDVEQHQH…SVSSASAAST (73 aa)) are disordered. 2 stretches are compositionally biased toward low complexity: residues 823–832 (QSRSQPQSPQ) and 846–861 (GSGRAHSVSSASAAST).

This sequence belongs to the NKD family.

It is found in the cell membrane. Its subcellular location is the cytoplasm. The protein resides in the nucleus. In terms of biological role, cell autonomous antagonist of the canonical Wnt signaling pathway. May activate a second Wnt signaling pathway that controls planar cell polarity. Required for neuroblast specification. This chain is Protein naked cuticle homolog (nkd), found in Anopheles gambiae (African malaria mosquito).